A 157-amino-acid chain; its full sequence is Probable succinate transporter subunit YjjB (157 aa).

The next 5 helical transmembrane spans lie at 8–28 (LALM…AMVF), 34–54 (ALPW…LMMS), 55–75 (AGFN…SIGI), 87–107 (VFTV…TAMI), and 129–149 (FLKA…PGLW).

This sequence belongs to the ThrE exporter (TC 2.A.79) family. As to quaternary structure, the transporter is composed of YjjB and YjjP.

The protein localises to the cell inner membrane. Functionally, involved in succinate export with YjjP. Both proteins are required for export. The protein is Probable succinate transporter subunit YjjB of Salmonella typhi.